Here is a 294-residue protein sequence, read N- to C-terminus: 4-hydroxybenzoate octaprenyltransferase (294 aa).

7 helical membrane-spanning segments follow: residues 37-57 (LWAM…WIFF), 101-121 (LAVA…LNAL), 142-162 (FFAI…PMAF), 169-189 (VPFV…AYDT), 219-239 (IMIC…LLGL), 241-261 (WPYY…YTLI), and 271-293 (AAFR…AYLL).

This sequence belongs to the UbiA prenyltransferase family. Mg(2+) serves as cofactor.

Its subcellular location is the cell inner membrane. It catalyses the reaction all-trans-octaprenyl diphosphate + 4-hydroxybenzoate = 4-hydroxy-3-(all-trans-octaprenyl)benzoate + diphosphate. Its pathway is cofactor biosynthesis; ubiquinone biosynthesis. Its function is as follows. Catalyzes the prenylation of para-hydroxybenzoate (PHB) with an all-trans polyprenyl group. Mediates the second step in the final reaction sequence of ubiquinone-8 (UQ-8) biosynthesis, which is the condensation of the polyisoprenoid side chain with PHB, generating the first membrane-bound Q intermediate 3-octaprenyl-4-hydroxybenzoate. In Cupriavidus metallidurans (strain ATCC 43123 / DSM 2839 / NBRC 102507 / CH34) (Ralstonia metallidurans), this protein is 4-hydroxybenzoate octaprenyltransferase.